The primary structure comprises 209 residues: Orotate phosphoribosyltransferase (209 aa).

5-phospho-alpha-D-ribose 1-diphosphate-binding positions include arginine 96, lysine 100, histidine 102, and 122-130 (EDLISTGGS). An orotate-binding site is contributed by serine 126.

Belongs to the purine/pyrimidine phosphoribosyltransferase family. PyrE subfamily. Homodimer. The cofactor is Mg(2+).

The enzyme catalyses orotidine 5'-phosphate + diphosphate = orotate + 5-phospho-alpha-D-ribose 1-diphosphate. It participates in pyrimidine metabolism; UMP biosynthesis via de novo pathway; UMP from orotate: step 1/2. In terms of biological role, catalyzes the transfer of a ribosyl phosphate group from 5-phosphoribose 1-diphosphate to orotate, leading to the formation of orotidine monophosphate (OMP). The chain is Orotate phosphoribosyltransferase from Lactococcus lactis subsp. lactis (strain IL1403) (Streptococcus lactis).